A 195-amino-acid chain; its full sequence is Cyclin-dependent kinase inhibitor 7 (195 aa).

Over residues 1-11 (MSETKPKRDSE) the composition is skewed to basic and acidic residues. Disordered regions lie at residues 1–50 (MSET…SVSD), 61–80 (EEED…SSET), and 117–154 (SSEN…TQAE). Low complexity-rich tracts occupy residues 37–50 (SSSS…SVSD) and 68–80 (SSSI…SSET). Position 151 is a phosphothreonine; by KIN10 (Thr151).

The protein belongs to the CDI family. ICK/KRP subfamily. Specifically interacts with CDKA-1, but not with CDKB1-1. Interacts with CYCD4-1. Binds to FBL17. In terms of processing, ubiquitinated by SCF(FBL17). Ubiquitination leads to its subsequent degradation, thus controlling cell cycle progression. As to expression, expressed in flowers, in developing pollen, and at lower levels in roots and leaves.

It localises to the nucleus. The protein localises to the nucleoplasm. In terms of biological role, binds and inhibits CYCD2-1/CDKA-1 complex kinase activity. May target specifically CDKA-1. The protein is Cyclin-dependent kinase inhibitor 7 (KRP7) of Arabidopsis thaliana (Mouse-ear cress).